A 230-amino-acid polypeptide reads, in one-letter code: PKHD-type hydroxylase Xfasm12_1709 (230 aa).

A Fe2OG dioxygenase domain is found at 78-182; the sequence is RTLPPRFNRY…RIASFFWVQS (105 aa). Positions 96, 98, and 163 each coordinate Fe cation. Arg173 contributes to the 2-oxoglutarate binding site.

The cofactor is Fe(2+). It depends on L-ascorbate as a cofactor.

In Xylella fastidiosa (strain M12), this protein is PKHD-type hydroxylase Xfasm12_1709.